A 76-amino-acid polypeptide reads, in one-letter code: MLILSRKVNEGIVIDDNIHIKVISIDRGSVRLGFEAPESTLILRTELKEAIVSENQKASASVDESLLENIKKVIKP.

The protein belongs to the CsrA/RsmA family. As to quaternary structure, homodimer; the beta-strands of each monomer intercalate to form a hydrophobic core, while the alpha-helices form wings that extend away from the core.

It localises to the cytoplasm. A translational regulator that binds mRNA to regulate translation initiation and/or mRNA stability. Usually binds in the 5'-UTR at or near the Shine-Dalgarno sequence preventing ribosome-binding, thus repressing translation. Its main target seems to be the major flagellin gene, while its function is anatagonized by FliW. This Helicobacter pylori (strain J99 / ATCC 700824) (Campylobacter pylori J99) protein is Translational regulator CsrA.